The sequence spans 455 residues: Bifunctional protein GlmU (455 aa).

A pyrophosphorylase region spans residues 1-225 (MNIVILAAGL…EWETLGVNSK (225 aa)). Residues 6–9 (LAAG), K20, Q71, 76–77 (GT), 98–100 (YGD), G135, E150, N165, and N223 each bind UDP-N-acetyl-alpha-D-glucosamine. A Mg(2+)-binding site is contributed by D100. Mg(2+) is bound at residue N223. The segment at 226 to 246 (VQLAELERIHQRNLAQQLLED) is linker. The N-acetyltransferase stretch occupies residues 247–455 (GVTLIDPARI…QRPVKQKKDA (209 aa)). Residues R329 and K347 each coordinate UDP-N-acetyl-alpha-D-glucosamine. The active-site Proton acceptor is H359. Y362 and N373 together coordinate UDP-N-acetyl-alpha-D-glucosamine. Residues A376, 382 to 383 (NY), S401, A419, and R436 contribute to the acetyl-CoA site.

The protein in the N-terminal section; belongs to the N-acetylglucosamine-1-phosphate uridyltransferase family. In the C-terminal section; belongs to the transferase hexapeptide repeat family. As to quaternary structure, homotrimer. Mg(2+) is required as a cofactor.

The protein localises to the cytoplasm. The enzyme catalyses alpha-D-glucosamine 1-phosphate + acetyl-CoA = N-acetyl-alpha-D-glucosamine 1-phosphate + CoA + H(+). It catalyses the reaction N-acetyl-alpha-D-glucosamine 1-phosphate + UTP + H(+) = UDP-N-acetyl-alpha-D-glucosamine + diphosphate. It functions in the pathway nucleotide-sugar biosynthesis; UDP-N-acetyl-alpha-D-glucosamine biosynthesis; N-acetyl-alpha-D-glucosamine 1-phosphate from alpha-D-glucosamine 6-phosphate (route II): step 2/2. Its pathway is nucleotide-sugar biosynthesis; UDP-N-acetyl-alpha-D-glucosamine biosynthesis; UDP-N-acetyl-alpha-D-glucosamine from N-acetyl-alpha-D-glucosamine 1-phosphate: step 1/1. The protein operates within bacterial outer membrane biogenesis; LPS lipid A biosynthesis. Catalyzes the last two sequential reactions in the de novo biosynthetic pathway for UDP-N-acetylglucosamine (UDP-GlcNAc). The C-terminal domain catalyzes the transfer of acetyl group from acetyl coenzyme A to glucosamine-1-phosphate (GlcN-1-P) to produce N-acetylglucosamine-1-phosphate (GlcNAc-1-P), which is converted into UDP-GlcNAc by the transfer of uridine 5-monophosphate (from uridine 5-triphosphate), a reaction catalyzed by the N-terminal domain. The sequence is that of Bifunctional protein GlmU from Ralstonia nicotianae (strain ATCC BAA-1114 / GMI1000) (Ralstonia solanacearum).